We begin with the raw amino-acid sequence, 1017 residues long: Putative calcium-transporting ATPase 13, plasma membrane-type (1017 aa).

An N-acetylmethionine modification is found at methionine 1. Residues 1 to 147 (MRRNVSDHAE…NTYTRQPSKG (147 aa)) are Cytoplasmic-facing. Residues 20 to 31 (LLELPKTLSKSN) are interaction with calmodulin. Residues 148–168 (LFHFVVEAFKDLTILILLGCA) form a helical membrane-spanning segment. Residues 169-186 (TLSLGFGIKEHGLKEGWY) are Lumenal-facing. The chain crosses the membrane as a helical span at residues 187–207 (DGGSIFVAVFLVVAVSAVSNF). Topologically, residues 208–336 (RQNRQFDKLS…NEQTPLQSRL (129 aa)) are cytoplasmic. Residues 337-356 (DKLTSSIGKVGLLVAFLVLL) traverse the membrane as a helical segment. The Lumenal segment spans residues 357–393 (VLLIRYFTGTTKDESGNREYNGKTTKSDEIVNAVVKM). A helical membrane pass occupies residues 394 to 411 (VAAAVTIIVVAIPEGLPL). The Cytoplasmic portion of the chain corresponds to 412–802 (AVTLTLAYSM…KWGRCVYNNI (391 aa)). Aspartate 449 acts as the 4-aspartylphosphate intermediate in catalysis. The Mg(2+) site is built by aspartate 747 and aspartate 751. The chain crosses the membrane as a helical span at residues 803 to 821 (QKFIQFQLTVNVAALVINF). Topologically, residues 822–832 (VAAVSAGDVPL) are lumenal. A helical transmembrane segment spans residues 833-853 (TAVQLLWVNLIMDTLGALALA). Over 854–873 (TEKPTNDLMKKKPIGRVAPL) the chain is Cytoplasmic. The chain crosses the membrane as a helical span at residues 874-896 (ITNIMWRNLLAQAFYQISVLLVL). At 897-905 (QFRGRSIFN) the chain is on the lumenal side. The chain crosses the membrane as a helical span at residues 906–926 (VTEKVKNTLIFNTFVLCQVFN). Over 927-944 (EFNARSLEKKNVFKGLHK) the chain is Cytoplasmic. A helical transmembrane segment spans residues 945 to 966 (NRLFIGIIVVTVVLQVVMVEFL). Topologically, residues 967-976 (KRFADTERLN) are lumenal. The helical transmembrane segment at 977-998 (LGQWGVCIAIAAASWPIGWLVK) threads the bilayer. At 999–1002 (SVPV) the chain is on the cytoplasmic side.

Belongs to the cation transport ATPase (P-type) (TC 3.A.3) family. Type IIB subfamily.

The protein localises to the membrane. The enzyme catalyses Ca(2+)(in) + ATP + H2O = Ca(2+)(out) + ADP + phosphate + H(+). Its activity is regulated as follows. Activated by calmodulin. In terms of biological role, this magnesium-dependent enzyme catalyzes the hydrolysis of ATP coupled with the translocation of calcium from the cytosol out of the cell or into organelles. The sequence is that of Putative calcium-transporting ATPase 13, plasma membrane-type (ACA13) from Arabidopsis thaliana (Mouse-ear cress).